Consider the following 2410-residue polypeptide: Reducing polyketide synthase FUB1 (2410 aa).

The span at 1–42 (MTLSNGSNGANGTSNGNGAHPSANGFHNAANGGANNGSANGG) shows a compositional bias: low complexity. The segment at 1–52 (MTLSNGSNGANGTSNGNGAHPSANGFHNAANGGANNGSANGGAEHDAGRPQV) is disordered. Residues 57 to 479 (SSAIAVIGVS…GANAHAVLDD (423 aa)) form the Ketosynthase family 3 (KS3) domain. Catalysis depends on for beta-ketoacyl synthase activity residues C230, H365, and H403. Residues 608–929 (TFIFTGQGAQ…FSAIKRKQDA (322 aa)) form a malonyl-CoA:ACP transacylase (MAT) domain region. Residue S699 is the For malonyltransferase activity of the active site. The tract at residues 994–1127 (LELLGVRDPR…GLVSTSYKHD (134 aa)) is N-terminal hotdog fold. A PKS/mFAS DH domain is found at 994–1307 (LELLGVRDPR…TVPLRGASDS (314 aa)). Residues 995 to 1302 (ELLGVRDPRS…LKGCKTVPLR (308 aa)) form a dehydratase (DH) domain region. H1026 (proton acceptor; for dehydratase activity) is an active-site residue. A C-terminal hotdog fold region spans residues 1155–1307 (LPSVDPTVFY…TVPLRGASDS (153 aa)). D1220 (proton donor; for dehydratase activity) is an active-site residue. Residues 1714-2026 (GLLDTLEYLS…SGGHVGKIVL (313 aa)) form an enoyl reductase (ER) domain region. The ketoreductase (KR) domain stretch occupies residues 2050-2226 (ATYVLIGGLG…AATSINLSLV (177 aa)). The Carrier domain occupies 2329 to 2406 (EVYEIVLQQL…GFTKKVMAKS (78 aa)). S2366 bears the O-(pantetheine 4'-phosphoryl)serine mark.

Its pathway is mycotoxin biosynthesis. Functionally, reducing polyketide synthase; part of the gene cluster that mediates the biosynthesis of fusaric acid, a mycotoxin with low to moderate toxicity to animals and humans, but with high phytotoxic properties. L-aspartate is suggested as fusaric acid amino acid precursor that is activated and further processed to O-acetyl-L-homoserine by cluster enzymes aspartate kinase FUB3 and homoserine O-acetyltransferase FUB5, as well as enzymes of the primary metabolism. The polyketide synthase (PKS) FUB1 generates the triketide trans-2-hexenal which is presumptively released by the hydrolase FUB4 and linked to the NRPS-bound amino acid precursor by NAD(P)-dependent dehydrogenase FUB6. FUB1, FUB4, and the non-canonical NRPS Fub8 may form an enzyme complex. Further processing of the NRPS-bound intermediate might be carried out by FUB6 and the sulfhydrylase FUB7, enabling a spontaneous electrocyclization to close the carbon backbone of fusaric acid. Dihydrofusaric acid is likely to be released via reduction by the thioester reductase (TR) domain of FUB8 whereupon the final oxidation to fusaric acid may (also) be performed by the FMN-dependent dehydrogenase FUB9. This Gibberella fujikuroi (strain CBS 195.34 / IMI 58289 / NRRL A-6831) (Bakanae and foot rot disease fungus) protein is Reducing polyketide synthase FUB1.